A 302-amino-acid chain; its full sequence is Homoserine kinase (302 aa).

92-102 (PLARGLGSSAT) is an ATP binding site.

Belongs to the GHMP kinase family. Homoserine kinase subfamily.

The protein resides in the cytoplasm. It carries out the reaction L-homoserine + ATP = O-phospho-L-homoserine + ADP + H(+). It functions in the pathway amino-acid biosynthesis; L-threonine biosynthesis; L-threonine from L-aspartate: step 4/5. In terms of biological role, catalyzes the ATP-dependent phosphorylation of L-homoserine to L-homoserine phosphate. The protein is Homoserine kinase of Trichormus variabilis (strain ATCC 29413 / PCC 7937) (Anabaena variabilis).